Consider the following 438-residue polypeptide: Putative F-box/FBD/LRR-repeat protein At2g05300 (438 aa).

Residues 13-59 form the F-box domain; the sequence is EDRISQLPDPLLTQILNLLPTEEAVKTSVLSTRWRTLWLWVPNLELS. 4 LRR repeats span residues 135–166, 167–192, 235–261, and 318–346; these read CDSL…RLKD, IVFH…KIDV, CLII…DISL, and YVTL…ILER. Positions 362–409 constitute an FBD domain; that stretch reads SMSSVPECLLTSLEFVEFKAPICGLGPEMMLVWYFLKNSPTLKKLTLP.

This Arabidopsis thaliana (Mouse-ear cress) protein is Putative F-box/FBD/LRR-repeat protein At2g05300.